Consider the following 468-residue polypeptide: Procollagen C-endopeptidase enhancer 1 (468 aa).

The signal sequence occupies residues 1–24 (MLPAALTSLLGPFLLAWVLPLARG). The N-linked (GlcNAc...) asparagine glycan is linked to Asn28. 4 disulfide bridges follow: Cys36–Cys62, Cys89–Cys111, Cys158–Cys185, and Cys212–Cys235. CUB domains follow at residues 36–148 (CGGD…YSGR) and 158–272 (CGGR…YRTL). Thr41 is modified (phosphothreonine). A Phosphoserine modification is found at Ser49. A disordered region spans residues 271 to 341 (TLPRDAVEKE…VAPDAPSITC (71 aa)). The span at 272–281 (LPRDAVEKES) shows a compositional bias: basic and acidic residues. 2 disulfides stabilise this stretch: Cys341–Cys409 and Cys356–Cys460. The region spanning 341-460 (CPKQYKRSGT…ILSNLSKRKC (120 aa)) is the NTR domain. Residue Asn454 is glycosylated (N-linked (GlcNAc...) asparagine).

Interacts with EFEMP2. Expressed at highest levels in collagen-rich tissues, especially tendon. Also expressed in cornea and sterna.

The protein localises to the secreted. Its function is as follows. Binds to the C-terminal propeptide of type I procollagen and enhances procollagen C-proteinase activity. The polypeptide is Procollagen C-endopeptidase enhancer 1 (Pcolce) (Rattus norvegicus (Rat)).